The sequence spans 130 residues: Histone H2A type 4 (130 aa).

Ser2 carries the post-translational modification Phosphoserine; by RPS6KA5. Citrulline; alternate is present on Arg4. Arg4 bears the Symmetric dimethylarginine; by PRMT5; alternate mark. 2 positions are modified to N6-(2-hydroxyisobutyryl)lysine; alternate: Lys6 and Lys10. N6-acetyllysine; alternate is present on residues Lys6 and Lys10. Residue Lys10 is modified to N6-lactoyllysine; alternate. Residues Lys75, Lys76, and Lys96 each carry the N6-(2-hydroxyisobutyryl)lysine modification. Lys96 carries the post-translational modification N6-glutaryllysine; alternate. N5-methylglutamine is present on Gln105. Lys119 is modified (N6-(2-hydroxyisobutyryl)lysine; alternate). Lys119 and Lys120 each carry N6-glutaryllysine; alternate. Lys119 bears the N6-crotonyllysine; alternate mark. Lys120 carries the post-translational modification N6-crotonyllysine. Position 121 is a phosphothreonine; by DCAF1 (Thr121). Lys126 is modified (N6-glutaryllysine; alternate). The residue at position 126 (Lys126) is an N6-crotonyllysine; alternate. Positions 127 to 128 match the [ST]-Q motif motif; sequence SQ.

Belongs to the histone H2A family. As to quaternary structure, the nucleosome is a histone octamer containing two molecules each of H2A, H2B, H3 and H4 assembled in one H3-H4 heterotetramer and two H2A-H2B heterodimers. The octamer wraps approximately 147 bp of DNA. In terms of processing, deiminated on Arg-4 in granulocytes upon calcium entry. Post-translationally, monoubiquitination of Lys-120 (H2AK119Ub) by RING1, TRIM37 and RNF2/RING2 complex gives a specific tag for epigenetic transcriptional repression and participates in X chromosome inactivation of female mammals. It is involved in the initiation of both imprinted and random X inactivation. Ubiquitinated H2A is enriched in inactive X chromosome chromatin. Ubiquitination of H2A functions downstream of methylation of 'Lys-27' of histone H3 (H3K27me). H2AK119Ub by RNF2/RING2 can also be induced by ultraviolet and may be involved in DNA repair. Following DNA double-strand breaks (DSBs), it is ubiquitinated through 'Lys-63' linkage of ubiquitin moieties by the E2 ligase UBE2N and the E3 ligases RNF8 and RNF168, leading to the recruitment of repair proteins to sites of DNA damage. Ubiquitination at Lys-14 and Lys-16 (H2AK13Ub and H2AK15Ub, respectively) in response to DNA damage is initiated by RNF168 that mediates monoubiquitination at these 2 sites, and 'Lys-63'-linked ubiquitin are then conjugated to monoubiquitin; RNF8 is able to extend 'Lys-63'-linked ubiquitin chains in vitro. H2AK119Ub and ionizing radiation-induced 'Lys-63'-linked ubiquitination (H2AK13Ub and H2AK15Ub) are distinct events. Phosphorylation on Ser-2 (H2AS1ph) is enhanced during mitosis. Phosphorylation on Ser-2 by RPS6KA5/MSK1 directly represses transcription. Acetylation of H3 inhibits Ser-2 phosphorylation by RPS6KA5/MSK1. Phosphorylation at Thr-121 (H2AT120ph) by DCAF1 is present in the regulatory region of many tumor suppresor genes and down-regulates their transcription. In terms of processing, symmetric dimethylation on Arg-4 by the PRDM1/PRMT5 complex may play a crucial role in the germ-cell lineage. Post-translationally, glutamine methylation at Gln-105 (H2AQ104me) by FBL is specifically dedicated to polymerase I. It is present at 35S ribosomal DNA locus and impairs binding of the FACT complex. Crotonylation (Kcr) is specifically present in male germ cells and marks testis-specific genes in post-meiotic cells, including X-linked genes that escape sex chromosome inactivation in haploid cells. Crotonylation marks active promoters and enhancers and confers resistance to transcriptional repressors. It is also associated with post-meiotically activated genes on autosomes. In terms of processing, lactylated in macrophages by EP300/P300 by using lactoyl-CoA directly derived from endogenous or exogenous lactate, leading to stimulates gene transcription. Testis.

It is found in the nucleus. The protein localises to the chromosome. Its function is as follows. Core component of nucleosome. Nucleosomes wrap and compact DNA into chromatin, limiting DNA accessibility to the cellular machineries which require DNA as a template. Histones thereby play a central role in transcription regulation, DNA repair, DNA replication and chromosomal stability. DNA accessibility is regulated via a complex set of post-translational modifications of histones, also called histone code, and nucleosome remodeling. The sequence is that of Histone H2A type 4 from Rattus norvegicus (Rat).